A 442-amino-acid polypeptide reads, in one-letter code: Threonine/serine transporter TdcC (442 aa).

Helical transmembrane passes span 21–41, 44–64, 96–116, 139–159, 162–182, 206–226, 258–278, 312–332, 364–384, 388–408, and 422–442; these read TTWT…FFPI, GFGG…IAFL, GVVI…IYGV, VVAL…KDLM, VMSF…LSLI, ILVT…FSPI, ASIL…FTLS, ITLE…SFFG, LISM…NPNI, IEAM…MYAI, and ENYF…YKLL.

This sequence belongs to the amino acid/polyamine transporter 2 family. SdaC/TdcC subfamily.

Its subcellular location is the cell inner membrane. It catalyses the reaction L-threonine(in) + H(+)(in) = L-threonine(out) + H(+)(out). The enzyme catalyses L-serine(in) + H(+)(in) = L-serine(out) + H(+)(out). In terms of biological role, involved in the import of threonine and serine into the cell, with the concomitant import of a proton (symport system). The sequence is that of Threonine/serine transporter TdcC from Yersinia enterocolitica serotype O:8 / biotype 1B (strain NCTC 13174 / 8081).